Reading from the N-terminus, the 175-residue chain is Probable DNA replication complex GINS protein PSF2 (175 aa).

This sequence belongs to the GINS2/PSF2 family. In terms of assembly, component of the GINS complex which is a heterotetramer of SLD5, PSF1, PSF2 and PSF3.

It is found in the nucleus. The GINS complex plays an essential role in the initiation of DNA replication. The chain is Probable DNA replication complex GINS protein PSF2 from Encephalitozoon cuniculi (strain GB-M1) (Microsporidian parasite).